Consider the following 828-residue polypeptide: Periplasmic nitrate reductase (828 aa).

The segment at residues 1–31 (MKLSRRSFMKANAVAAAAAAAGLSVPGVARA) is a signal peptide (tat-type signal). The 57-residue stretch at 39–95 (IKWDKAPCRFCGTGCGVLVGTQQGRVVACQGDPDAPVNRGLNCIKGYFLPKIMYGKD) folds into the 4Fe-4S Mo/W bis-MGD-type domain. C46, C49, C53, and C81 together coordinate [4Fe-4S] cluster. Residues K83, Q150, N175, C179, 212-219 (WGANMAEM), 243-247 (STYQH), 262-264 (QSD), M372, Q376, N482, 508-509 (SD), K531, D558, and 718-727 (TGRVLEHWHT) each bind Mo-bis(molybdopterin guanine dinucleotide). F794 serves as a coordination point for substrate. Mo-bis(molybdopterin guanine dinucleotide) is bound by residues N802 and K819.

It belongs to the prokaryotic molybdopterin-containing oxidoreductase family. NasA/NapA/NarB subfamily. Component of the periplasmic nitrate reductase NapAB complex composed of NapA and NapB. It depends on [4Fe-4S] cluster as a cofactor. Mo-bis(molybdopterin guanine dinucleotide) serves as cofactor. Predicted to be exported by the Tat system. The position of the signal peptide cleavage has not been experimentally proven.

It localises to the periplasm. It carries out the reaction 2 Fe(II)-[cytochrome] + nitrate + 2 H(+) = 2 Fe(III)-[cytochrome] + nitrite + H2O. Functionally, catalytic subunit of the periplasmic nitrate reductase complex NapAB. Receives electrons from NapB and catalyzes the reduction of nitrate to nitrite. This is Periplasmic nitrate reductase from Shigella boydii serotype 18 (strain CDC 3083-94 / BS512).